The primary structure comprises 130 residues: Large ribosomal subunit protein bL20 (130 aa).

The protein belongs to the bacterial ribosomal protein bL20 family.

Functionally, binds directly to 23S ribosomal RNA and is necessary for the in vitro assembly process of the 50S ribosomal subunit. It is not involved in the protein synthesizing functions of that subunit. This Salinispora tropica (strain ATCC BAA-916 / DSM 44818 / JCM 13857 / NBRC 105044 / CNB-440) protein is Large ribosomal subunit protein bL20.